The sequence spans 422 residues: 5-hydroxytryptamine receptor 1A (422 aa).

Residues 1-23 are disordered; that stretch reads MDVLSPGQGNNTTSPPAPFETGG. Topologically, residues 1–38 are extracellular; it reads MDVLSPGQGNNTTSPPAPFETGGNTTGISDVTFSYQVI. N-linked (GlcNAc...) asparagine glycosylation is found at asparagine 10, asparagine 11, and asparagine 24. A helical membrane pass occupies residues 39–59; the sequence is TSLLLGTLIFCAVLGNACVVA. The Cytoplasmic portion of the chain corresponds to 60 to 73; sequence AIALERSLQNVANY. Residues 74–98 form a helical membrane-spanning segment; it reads LIGSLAVTDLMVSVLVLPMAALYQV. The Extracellular portion of the chain corresponds to 99-107; sequence LNKWTLGQV. The helical transmembrane segment at 108-132 threads the bilayer; that stretch reads TCDLFIALDVLCCTSSILHLCAIAL. A disulfide bond links cysteine 109 and cysteine 187. The serotonin site is built by aspartate 116 and cysteine 120. A DRY motif; important for ligand-induced conformation changes motif is present at residues 133 to 135; the sequence is DRY. The Cytoplasmic segment spans residues 133–152; that stretch reads DRYWAITDPIDYVNKRTPRR. Residues 153–174 form a helical membrane-spanning segment; it reads AAALISLTWLIGFLISIPPMLG. Topologically, residues 175 to 193 are extracellular; sequence WRTPEDRSDPDACTISKDH. The chain crosses the membrane as a helical span at residues 194–216; that stretch reads GYTIYSTFGAFYIPLLLMLVLYG. The Cytoplasmic portion of the chain corresponds to 217-346; that stretch reads RIFRAARFRI…LARERKTVKT (130 aa). The interval 235–262 is disordered; that stretch reads KTGADTRHGASPAPQPKKSVNGESGSRN. 4 residues coordinate 1D-myo-inositol 4-phosphate: threonine 314, lysine 345, threonine 346, and glycine 352. A helical membrane pass occupies residues 347-370; it reads LGIIMGTFILCWLPFFIVALVLPF. Residues 371 to 378 lie on the Extracellular side of the membrane; it reads CESSCHMP. A helical transmembrane segment spans residues 379–403; it reads TLLGAIINWLGYSNSLLNPVIYAYF. Residues 396–400 carry the NPxxY motif; important for ligand-induced conformation changes and signaling motif; that stretch reads NPVIY. Positions 403, 404, and 405 each coordinate 1D-myo-inositol 4-phosphate. The Cytoplasmic portion of the chain corresponds to 404–422; it reads NKDFQNAFKKIIKCKFCRQ.

This sequence belongs to the G-protein coupled receptor 1 family. 5-hydroxytryptamine receptor subfamily. HTR1A sub-subfamily. As to quaternary structure, heterodimer; heterodimerizes with GPER1. Interacts with YIF1B. Interacts with GPR39 and GALR1.

It localises to the cell membrane. Its subcellular location is the cell projection. The protein resides in the dendrite. G-protein coupled receptor activity is regulated by lipids: phosphatidylinositol 4-phosphate increases HTR1A-mediated activity. In terms of biological role, G-protein coupled receptor for 5-hydroxytryptamine (serotonin). Also functions as a receptor for various drugs and psychoactive substances. Ligand binding causes a conformation change that triggers signaling via guanine nucleotide-binding proteins (G proteins) and modulates the activity of downstream effectors, such as adenylate cyclase. HTR1A is coupled to G(i)/G(o) G alpha proteins and mediates inhibitory neurotransmission: signaling inhibits adenylate cyclase activity and activates a phosphatidylinositol-calcium second messenger system that regulates the release of Ca(2+) ions from intracellular stores. Beta-arrestin family members regulate signaling by mediating both receptor desensitization and resensitization processes. The protein is 5-hydroxytryptamine receptor 1A (HTR1A) of Gorilla gorilla gorilla (Western lowland gorilla).